A 104-amino-acid chain; its full sequence is Large ribosomal subunit protein bL21 (104 aa).

This sequence belongs to the bacterial ribosomal protein bL21 family. In terms of assembly, part of the 50S ribosomal subunit. Contacts protein L20.

This protein binds to 23S rRNA in the presence of protein L20. This Francisella tularensis subsp. tularensis (strain FSC 198) protein is Large ribosomal subunit protein bL21.